Reading from the N-terminus, the 206-residue chain is dCTP deaminase, dUMP-forming (206 aa).

Residues 117 to 122 (RSSFGR), Asp135, 143 to 145 (TLE), Gln163, Tyr177, Lys184, and Gln188 each bind dCTP. Residue Glu145 is the Proton donor/acceptor of the active site.

Belongs to the dCTP deaminase family. In terms of assembly, homotrimer.

It carries out the reaction dCTP + 2 H2O = dUMP + NH4(+) + diphosphate. It functions in the pathway pyrimidine metabolism; dUMP biosynthesis; dUMP from dCTP: step 1/1. Bifunctional enzyme that catalyzes both the deamination of dCTP to dUTP and the hydrolysis of dUTP to dUMP without releasing the toxic dUTP intermediate. In Methanococcus maripaludis (strain C5 / ATCC BAA-1333), this protein is dCTP deaminase, dUMP-forming.